The sequence spans 382 residues: Protein shisa-9A (382 aa).

The first 26 residues, 1–26 (MKWTVLLLEYFLVKVLVLLYSADGEA), serve as a signal peptide directing secretion. The Extracellular portion of the chain corresponds to 27–132 (QQLEGFIMLS…DPRHDPTKDK (106 aa)). N39 carries an N-linked (GlcNAc...) asparagine glycan. A helical transmembrane segment spans residues 133-153 (TNLIVYIICGVVAIMALVGIF). The Cytoplasmic portion of the chain corresponds to 154-382 (TKLGLEKAHR…VTNSKAEVTV (229 aa)).

Belongs to the shisa family. SHISA9 subfamily. As to quaternary structure, component of some AMPA receptors (ionotropic glutamate receptors) complex.

The protein resides in the cell projection. It localises to the dendritic spine membrane. Its subcellular location is the synapse. Regulator of short-term neuronal synaptic plasticity in the dentate gyrus. Associates with AMPA receptors (ionotropic glutamate receptors) in synaptic spines and promotes AMPA receptor desensitization at excitatory synapses. This Danio rerio (Zebrafish) protein is Protein shisa-9A (shisa9a).